We begin with the raw amino-acid sequence, 569 residues long: Glutamate--tRNA ligase (569 aa).

The short motif at 108–118 (PNPDFVLHLGS) is the 'HIGH' region element.

The protein belongs to the class-I aminoacyl-tRNA synthetase family. Glutamate--tRNA ligase type 2 subfamily.

It localises to the cytoplasm. It catalyses the reaction tRNA(Glu) + L-glutamate + ATP = L-glutamyl-tRNA(Glu) + AMP + diphosphate. Functionally, catalyzes the attachment of glutamate to tRNA(Glu) in a two-step reaction: glutamate is first activated by ATP to form Glu-AMP and then transferred to the acceptor end of tRNA(Glu). This chain is Glutamate--tRNA ligase, found in Thermofilum pendens (strain DSM 2475 / Hrk 5).